We begin with the raw amino-acid sequence, 431 residues long: Polyprenol-phosphate-mannose-dependent alpha-(1-2)-phosphatidylinositol pentamannoside mannosyltransferase (431 aa).

10 helical membrane-spanning segments follow: residues 43–63, 108–128, 148–168, 175–195, 202–222, 229–249, 290–310, 332–352, 364–384, and 397–417; these read AAVL…YLAP, FAAV…ALLW, GGTA…AIWI, FDYG…VYTP, LLVG…VYLV, AAAF…LVVG, GFGP…ILAW, LSPI…IWLI, ILGW…LSFA, and LAWA…WIAA.

Belongs to the glycosyltransferase 87 family.

Its subcellular location is the cell membrane. Its pathway is phospholipid metabolism; phosphatidylinositol metabolism. Functionally, catalyzes the alpha-1,2 addition of a mannose residue from polyprenol-phosphate-mannose (PPM) to a monoacyl phosphatidylinositol tetramannoside (AcPIM4) to generate a monoacyl phosphatidylinositol pentamannoside (AcPIM5). This is Polyprenol-phosphate-mannose-dependent alpha-(1-2)-phosphatidylinositol pentamannoside mannosyltransferase (pimE) from Mycobacterium tuberculosis (strain CDC 1551 / Oshkosh).